The primary structure comprises 614 residues: MDPSKDTSPQVRLEKITYNYPYSDAAALSDVNLELKKGEFVLLAGPSGCGKSTLVRCLNRLVPEVSGGSFSGRVLLRGKDLTHEKVHSLALEVGMVFQNPETQLFSLTVAEDLAFGPENLGLPGEEIRIRVKKVLKEVGLKGLEDHFIFTLSGGEKQRTAIGGNLAMQPEILVLDEPTSDLDPAGTGEVLELLKHLNAENRTTLILIEHKLDAVFEMVDRMLVMDEGRVILDGKPFEILCREEEKLRKLGIHPPQFTEIARFLGFFSENSSIPAYETLLKRLTELLQASEVEIHPEDLEKRESEIPAPAPQPRNTPPHVLIEQLCYRHEDGSEAFEKLNLEIKRGEFLALLGHNGAGKTTLAGHLIGFYRPASGRILLDGKDISGYSTARLSKQVGYLFQNPDSQIFTNSVFEEVCFGLENLGMPEEKIKKLADSALEMMELSAYRNRHPHALSRGQRQRLAVASILALEPDLLILDEPTTGQDRGHIRKFLDKIRKLNGLGKTVILITHDMELAAEYAERVVVMKQGKIFLDGPTAEVFSSPEELGAAGLLPPLPARLALDLRKLGIDIPRLLTVSDLKSFLKARCPELSACRPTEIEKIVEENDSGEEVSLF.

2 consecutive ABC transporter domains span residues V11–I251 and V319–L552. ATP-binding positions include G45–S52 and G352–T359.

This sequence belongs to the ABC transporter superfamily.

The protein resides in the cell membrane. Functionally, probably part of an ABC transporter complex. Responsible for energy coupling to the transport system. This Methanosarcina acetivorans (strain ATCC 35395 / DSM 2834 / JCM 12185 / C2A) protein is Putative ABC transporter ATP-binding protein MA_1747.